Reading from the N-terminus, the 579-residue chain is Mycobactin import ATP-binding/permease protein IrtB (579 aa).

Topologically, residues 1-16 (MIRTWIALVPNDHRAR) are cytoplasmic. Residues 17 to 37 (LIGFALLAFCSVVARAVGTVL) form a helical membrane-spanning segment. In terms of domain architecture, ABC transmembrane type-1 spans 17–299 (LIGFALLAFC…VSELAPALES (283 aa)). Residues 38–52 (LVPLMAALFGEAPQR) lie on the Periplasmic side of the membrane. A helical membrane pass occupies residues 53-73 (AWLWLGWLSAATVAGWVLDAV). Over 74–123 (TARIGIELGFAVLNHTQHDVADRLPVVRLDWFTAENTATARQAIAATGPE) the chain is Cytoplasmic. A helical membrane pass occupies residues 124-146 (LVGLVVNLVTPLTSAILLPAVIA). Over 147–155 (LALLPISWQ) the chain is Periplasmic. The helical transmembrane segment at 156–178 (LGVAALAGVPLLLGALWASAAFA) threads the bilayer. At 179-237 (RRADTAADKANTALTERIIEFARTQQALRAARRVEPARSLVGNALASQHTATMRLLGMQ) the chain is on the cytoplasmic side. A helical membrane pass occupies residues 238–258 (IPGQLLFSIASQLALIVLAGT). The Periplasmic portion of the chain corresponds to 259-579 (TAALTITGTL…EAAEWQILAE (321 aa)). Positions 332–567 (IEFDDVAFGY…GGRFSQFWRQ (236 aa)) constitute an ABC transporter domain. 366–373 (GPSGCGKS) provides a ligand contact to ATP.

It belongs to the ABC transporter superfamily. Siderophore-Fe(3+) uptake transporter (SIUT) (TC 3.A.1.21) family. In terms of assembly, forms a heterodimer with IrtA.

The protein localises to the cell inner membrane. Part of the ABC transporter complex IrtAB involved in the import of iron-bound mycobactin (Fe-MBT) and carboxymycobactin (Fe-cMBT). Transmembrane domains (TMD) form a pore in the membrane and the ATP-binding domain (NBD) is responsible for energy generation. This is Mycobactin import ATP-binding/permease protein IrtB (irtB) from Mycobacterium bovis (strain ATCC BAA-935 / AF2122/97).